The following is a 245-amino-acid chain: 6-carboxyhexanoate--CoA ligase (245 aa).

The protein belongs to the BioW family. In terms of assembly, homodimer. Mg(2+) serves as cofactor.

The enzyme catalyses heptanedioate + ATP + CoA = 6-carboxyhexanoyl-CoA + AMP + diphosphate. Its pathway is metabolic intermediate metabolism; pimeloyl-CoA biosynthesis; pimeloyl-CoA from pimelate: step 1/1. Its function is as follows. Catalyzes the transformation of pimelate into pimeloyl-CoA with concomitant hydrolysis of ATP to AMP. This chain is 6-carboxyhexanoate--CoA ligase, found in Sulfurihydrogenibium azorense (strain DSM 15241 / OCM 825 / Az-Fu1).